The chain runs to 212 residues: MNLFDKKHLVTQADALPGRNTPMPIATLHAVNEHSMTNVPAGMEIAYFAMGCFWGVERLFWQLPGVYSTAAGYAGGYTPNPTYREVCSGQTGHAEAVRIVYDPAVIRYEQLLQTFWENHDPTQGMQQGNDHGTQYRSAIYPLTPEQNAAAHASRERFQSAMAAAGDHRPITTEIAHATPFYYAEDEHQQYLHKNPYGYCGIGGIGVCLPPDA.

The active site involves cysteine 52.

This sequence belongs to the MsrA Met sulfoxide reductase family.

It catalyses the reaction L-methionyl-[protein] + [thioredoxin]-disulfide + H2O = L-methionyl-(S)-S-oxide-[protein] + [thioredoxin]-dithiol. The catalysed reaction is [thioredoxin]-disulfide + L-methionine + H2O = L-methionine (S)-S-oxide + [thioredoxin]-dithiol. Its function is as follows. Has an important function as a repair enzyme for proteins that have been inactivated by oxidation. Catalyzes the reversible oxidation-reduction of methionine sulfoxide in proteins to methionine. This Salmonella choleraesuis (strain SC-B67) protein is Peptide methionine sulfoxide reductase MsrA.